Consider the following 192-residue polypeptide: dTTP/UTP pyrophosphatase (192 aa).

The active-site Proton acceptor is Asp-71.

The protein belongs to the Maf family. YhdE subfamily. Requires a divalent metal cation as cofactor.

It localises to the cytoplasm. It catalyses the reaction dTTP + H2O = dTMP + diphosphate + H(+). It carries out the reaction UTP + H2O = UMP + diphosphate + H(+). Its function is as follows. Nucleoside triphosphate pyrophosphatase that hydrolyzes dTTP and UTP. May have a dual role in cell division arrest and in preventing the incorporation of modified nucleotides into cellular nucleic acids. This chain is dTTP/UTP pyrophosphatase, found in Pseudoalteromonas atlantica (strain T6c / ATCC BAA-1087).